We begin with the raw amino-acid sequence, 643 residues long: Beta-1,3-galactosyltransferase GALT1 (643 aa).

Residues 1-6 (MKRFYG) are Cytoplasmic-facing. A helical; Signal-anchor for type II membrane protein transmembrane segment spans residues 7 to 23 (GLLVVSMCMFLTVYRYV). The Lumenal portion of the chain corresponds to 24-643 (DLNTPVEKPY…TKRSLCCREW (620 aa)). N45, N87, N144, N162, N277, N287, and N508 each carry an N-linked (GlcNAc...) asparagine glycan. In terms of domain architecture, Galectin spans 171-364 (LKLQIPCGLT…DFRLISILAS (194 aa)).

The protein belongs to the glycosyltransferase 31 family. As to quaternary structure, interacts with GMII. Mn(2+) serves as cofactor. In terms of tissue distribution, expressed in stems and siliques.

The protein resides in the golgi apparatus membrane. Its pathway is protein modification; protein glycosylation. In terms of biological role, beta-1,3-galactosyltransferase that transfers galactose from UDP-galactose to substrates with a terminal beta-N-acetylglucosamine (beta-GlcNAc) residue. Involved in the biosynthesis of N-glycans containing Lewis a structures (with the combination of FUT13). This Arabidopsis thaliana (Mouse-ear cress) protein is Beta-1,3-galactosyltransferase GALT1.